Consider the following 440-residue polypeptide: D-serine dehydratase (440 aa).

Residue K116 is modified to N6-(pyridoxal phosphate)lysine.

Belongs to the serine/threonine dehydratase family. DsdA subfamily. Monomer. Pyridoxal 5'-phosphate serves as cofactor.

It carries out the reaction D-serine = pyruvate + NH4(+). This chain is D-serine dehydratase, found in Salmonella schwarzengrund (strain CVM19633).